Reading from the N-terminus, the 539-residue chain is MKFDPEKIKRDAKENFDLTWNEGKKLVRTPTLNERYPRTILKYGKAHPVYDTIQKLREAYLRMGFEEMMNPLIVDDKEVHKQFGSEALAVLDRCFYLAGLPRPNVGISDERTAEVKEILGDIGNDGVEKIRQVLHSYKKGKIEGDDLVPEISTVLGVSDALVADMIDKVFPEFKELVPQASTKTLRSHMTSGWFISLGALLERQEPPFHFFSVDRCFRREQQEDASRLMTYYSASCVIMDEGVTVDHGKAVSEGLLSQFGFEKFLFRPDEKRSKYYIPDTQTEVFAFHPKLVGSNSKYSDGWIEIATFGIYSPTALAQYDIPCPVMNLGLGVERLAMILHDAPDIRSLTYPQIPQYTEWEMSDGELAKQVFVDKVPETSEGLAIAASIVSQCELHGEEPSPCEFPSWEGEICGRKVKVSVIEPEENTKLCGPAAFNEVVAYQGDIMGIPNTKKWQKAFENHSARAGIRFIEAFAAQAAREIEEAALSGATEHIVRIRIAKVPSEVNLRIGSIAQRYVTGKKKKIDMRGPVFTSVKAEFV.

Substrate is bound by residues 188 to 190 (HMT), 233 to 235 (SAS), 275 to 276 (YY), and N327.

Belongs to the class-II aminoacyl-tRNA synthetase family. O-phosphoseryl-tRNA(Cys) synthetase subfamily. In terms of assembly, homotetramer. Interacts with SepCysS.

The enzyme catalyses tRNA(Cys) + O-phospho-L-serine + ATP = O-phospho-L-seryl-tRNA(Cys) + AMP + diphosphate. Catalyzes the attachment of O-phosphoserine (Sep) to tRNA(Cys). This is O-phosphoserine--tRNA(Cys) ligase from Methanosarcina barkeri (strain Fusaro / DSM 804).